Consider the following 4036-residue polypeptide: Hybrid PKS-NRPS synthetase iliA (4036 aa).

One can recognise a Ketosynthase family 3 (KS3) domain in the interval 7–439 (PEPIAVIGSA…GTNAHAIIES (433 aa)). Catalysis depends on for beta-ketoacyl synthase activity residues Cys181, His318, and His359. Positions 561–886 (IFTGQGAQWP…LKRNGSDVEA (326 aa)) are malonyl-CoA:ACP transacylase (MAT) domain. The N-terminal hotdog fold stretch occupies residues 955 to 1092 (HELLGRRTPD…GDLVVHLGAD (138 aa)). Positions 955 to 1262 (HELLGRRTPD…ATNMVGEQDA (308 aa)) are dehydratase (DH) domain. The 309-residue stretch at 955–1263 (HELLGRRTPD…TNMVGEQDAS (309 aa)) folds into the PKS/mFAS DH domain. His987 functions as the Proton acceptor; for dehydratase activity in the catalytic mechanism. The segment at 1109–1263 (LVNIDGERVY…TNMVGEQDAS (155 aa)) is C-terminal hotdog fold. Residue Asp1168 is the Proton donor; for dehydratase activity of the active site. Positions 1402 to 1601 (EDDMLDRFYM…FSGADTVMHD (200 aa)) are methyltransferase (MT) domain. A ketoreductase (KR) domain region spans residues 2136–2277 (KTYFMVGMAG…SVATVIGNIG (142 aa)). Positions 2425–2502 (EAVAAVVKAF…QVCTWATKKV (78 aa)) constitute a Carrier 1 domain. Ser2462 bears the O-(pantetheine 4'-phosphoryl)serine mark. 2 disordered regions span residues 2520–2583 (AEKT…KLGT) and 2597–2621 (DADARSESTGSSGMADSDDSSNRPE). The segment covering 2530–2540 (APAPDAAPAPA) has biased composition (pro residues). The segment at 2627-3054 (IMSQAQSRIW…HLDITECEIY (428 aa)) is condensation (C) domain. The tract at residues 3088–3485 (SLHSDKSAVK…GTLLCLGRLD (398 aa)) is adenylation (A) (KR) domain. The interval 3088–3485 (SLHSDKSAVK…GTLLCLGRLD (398 aa)) is reductase (RED) domain. One can recognise a Carrier 2 domain in the interval 3596-3675 (EKMTIREGEV…EMARRIDEHQ (80 aa)). Ser3635 carries the post-translational modification O-(pantetheine 4'-phosphoryl)serine.

This sequence in the C-terminal section; belongs to the NRP synthetase family.

The catalysed reaction is L-tyrosine + holo-[ACP] + 7 malonyl-CoA + acetyl-CoA + 8 AH2 + 2 S-adenosyl-L-methionine + ATP + 4 H(+) = N-[(4E,6E,10S,12Z,14E)-6,10-dimethyl-3-oxohexadeca-4,6,12,14-tetraenoyl]-L-tyrosyl-[ACP] + 8 A + AMP + 2 S-adenosyl-L-homocysteine + 7 CO2 + diphosphate + 8 CoA + 6 H2O. The protein operates within mycotoxin biosynthesis. In terms of biological role, hybrid PKS-NRPS synthetase; part of the gene cluster that mediates the biosynthesis of ilicicolin H, a 4-hydroxy-2-pyridonealkaloid that has potent and broad antifungal activities by inhibiting the mitochondrial respiration chain. IliA assembles the backbone of ilicicolin H. The PKS portion and trans-acting enoyl reductase iliB work together to construct an octaketide, and two methyl groups are introduced by the MT domain during the chain assembly. The nascent chain is then condensed with tyrosine, catalyzed by the C domain, and the resulting PKS-NRPS hybrid is offloaded by the RED domain to form an advanced tetramic acid intermediate. The biosynthesis of ilicicolin H starts with formation of the tetramic acid by the hybrid PKS-NRPS synthetase iliA with the partnering trans-enoyl reductase iliB since iliA lacks a designated enoylreductase (ER) domain. The cytochrome P450 monooxygenase iliC then catalyzes the ring expansion of the tetramate to the acyclic 2-pyridone. The pericyclase iliD further converts the acyclic 2-pyridone into 8-epi-ilicicolin H. 8-epi-ilicicolin H might then spontaneously convert to ilicicolin H, since ilicicolin H is produced in the absence of the epimerase iliE, in contrast to what was observed for the Talaromyces variabilis ilicolin H biosynthetic pathway. The polypeptide is Hybrid PKS-NRPS synthetase iliA (Neonectria sp. (strain DH2)).